The following is a 388-amino-acid chain: Lipid-A-disaccharide synthase (388 aa).

This sequence belongs to the LpxB family.

It carries out the reaction a lipid X + a UDP-2-N,3-O-bis[(3R)-3-hydroxyacyl]-alpha-D-glucosamine = a lipid A disaccharide + UDP + H(+). It participates in bacterial outer membrane biogenesis; LPS lipid A biosynthesis. Functionally, condensation of UDP-2,3-diacylglucosamine and 2,3-diacylglucosamine-1-phosphate to form lipid A disaccharide, a precursor of lipid A, a phosphorylated glycolipid that anchors the lipopolysaccharide to the outer membrane of the cell. The chain is Lipid-A-disaccharide synthase from Burkholderia thailandensis (strain ATCC 700388 / DSM 13276 / CCUG 48851 / CIP 106301 / E264).